We begin with the raw amino-acid sequence, 299 residues long: ATP phosphoribosyltransferase (299 aa).

The protein belongs to the ATP phosphoribosyltransferase family. Long subfamily. The cofactor is Mg(2+).

Its subcellular location is the cytoplasm. It catalyses the reaction 1-(5-phospho-beta-D-ribosyl)-ATP + diphosphate = 5-phospho-alpha-D-ribose 1-diphosphate + ATP. The protein operates within amino-acid biosynthesis; L-histidine biosynthesis; L-histidine from 5-phospho-alpha-D-ribose 1-diphosphate: step 1/9. Feedback inhibited by histidine. Its function is as follows. Catalyzes the condensation of ATP and 5-phosphoribose 1-diphosphate to form N'-(5'-phosphoribosyl)-ATP (PR-ATP). Has a crucial role in the pathway because the rate of histidine biosynthesis seems to be controlled primarily by regulation of HisG enzymatic activity. This chain is ATP phosphoribosyltransferase, found in Rhodopirellula baltica (strain DSM 10527 / NCIMB 13988 / SH1).